Here is a 531-residue protein sequence, read N- to C-terminus: Large neutral amino acids transporter small subunit 2 (531 aa).

The tract at residues 1 to 29 (MEKGARQRNNTAKNHPGSDTSPEAEASSG) is disordered. Residues 1–43 (MEKGARQRNNTAKNHPGSDTSPEAEASSGGGGVALKKEIGLVS) lie on the Cytoplasmic side of the membrane. Residues 7 to 21 (QRNNTAKNHPGSDTS) show a composition bias toward polar residues. Residues serine 18, serine 21, serine 27, and serine 28 each carry the phosphoserine modification. A helical transmembrane segment spans residues 44–64 (ACGIIVGNIIGSGIFVSPKGV). Isoleucine 52 is a binding site for L-leucine. The Extracellular segment spans residues 65–72 (LENAGSVG). Residues 73-94 (LALIVWIVTGIITAVGALCYAE) traverse the membrane as a helical segment. Over 95–115 (LGVTIPKSGGDYSYVKDIFGG) the chain is Cytoplasmic. Residues 116–148 (LAGFLRLWIAVLVIYPTNQAVIALTFSNYVLQP) form a helical membrane-spanning segment. Asparagine 133 lines the L-tryptophan pocket. Topologically, residues 149–156 (LFPTCFPP) are extracellular. The chain crosses the membrane as a helical span at residues 157-177 (ESGLRLLAAICLLLLTWVNCS). The Cytoplasmic segment spans residues 178–180 (SVR). A helical membrane pass occupies residues 181 to 209 (WATRVQDIFTAGKLLALALIIIMGIVQIC). The Extracellular portion of the chain corresponds to 210-229 (KGEFFWLEPKNAFENFQEPD). Residues 230–251 (IGLVALAFLQGSFAYGGWNFLN) traverse the membrane as a helical segment. Glycine 245 provides a ligand contact to L-leucine. At 252-264 (YVTEELVDPYKNL) the chain is on the cytoplasmic side. A helical membrane pass occupies residues 265 to 286 (PRAIFISIPLVTFVYVFANIAY). Topologically, residues 287-311 (VTAMSPQELLASNAVAVTFGEKLLG) are extracellular. The chain crosses the membrane as a helical span at residues 312 to 337 (VMAWIMPISVALSTFGGVNGSLFTSS). Topologically, residues 338-363 (RLFFAGAREGHLPSVLAMIHVKRCTP) are cytoplasmic. The chain crosses the membrane as a helical span at residues 364 to 381 (IPALLFTCLSTLLMLVTS). At 382–385 (DMYT) the chain is on the extracellular side. Residues 386 to 407 (LINYVGFINYLFYGVTVAGQIV) form a helical membrane-spanning segment. Asparagine 394 is an L-tryptophan binding site. At 408-422 (LRWKKPDIPRPIKVS) the chain is on the cytoplasmic side. 2 helical membrane passes run 423–445 (LLFP…WSEP) and 446–465 (VVCG…YFLG). Residues 466–531 (VYWQHKPKCF…VKDPDSEEQP (66 aa)) lie on the Cytoplasmic side of the membrane. The segment at 499 to 531 (NSGAEETTDDLEEQHKPIFKPTPVKDPDSEEQP) is disordered. The residue at position 527 (serine 527) is a Phosphoserine.

Belongs to the amino acid-polyamine-organocation (APC) superfamily. L-type amino acid transporter (LAT) (TC 2.A.3.8) family. Disulfide-linked heterodimer composed of the catalytic light chain subunit SLC7A8 and the heavy chain subunit SLC3A2. SLC3A2 acts as a chaperone for correct plasma membrane trafficking and stabilization of SLC7A8 and modulates the substrate affinity and specificity of SLC7A8. ICAM-1 associates with the heterodimer SLC3A2/SLC7A8; facilitates leucine uptake. In terms of tissue distribution, strongly expressed in kidney and small intestine. Moderately present in placenta, ovary and brain. Expressed in the inner ear.

It is found in the cell membrane. Its subcellular location is the basolateral cell membrane. The catalysed reaction is L-histidine(in) + L-phenylalanine(out) = L-histidine(out) + L-phenylalanine(in). It carries out the reaction L-tryptophan(in) + L-phenylalanine(out) = L-tryptophan(out) + L-phenylalanine(in). It catalyses the reaction L-isoleucine(in) + L-phenylalanine(out) = L-isoleucine(out) + L-phenylalanine(in). The enzyme catalyses L-valine(in) + L-phenylalanine(out) = L-valine(out) + L-phenylalanine(in). The catalysed reaction is L-leucine(in) + L-phenylalanine(out) = L-leucine(out) + L-phenylalanine(in). It carries out the reaction L-glutamine(in) + L-phenylalanine(out) = L-glutamine(out) + L-phenylalanine(in). It catalyses the reaction L-cysteine(in) + L-phenylalanine(out) = L-cysteine(out) + L-phenylalanine(in). The enzyme catalyses L-phenylalanine(out) + L-methionine(in) = L-phenylalanine(in) + L-methionine(out). The catalysed reaction is L-leucine(out) + L-methionine(in) = L-leucine(in) + L-methionine(out). It carries out the reaction L-cysteine(out) + L-methionine(in) = L-cysteine(in) + L-methionine(out). It catalyses the reaction S-methylmercury-L-cysteine(out) + L-methionine(in) = S-methylmercury-L-cysteine(in) + L-methionine(out). The enzyme catalyses S-methylmercury-L-cysteine(in) + L-leucine(out) = S-methylmercury-L-cysteine(out) + L-leucine(in). The catalysed reaction is S-methylmercury-L-cysteine(in) + L-phenylalanine(out) = S-methylmercury-L-cysteine(out) + L-phenylalanine(in). It carries out the reaction L-phenylalanine(out) + L-serine(in) = L-phenylalanine(in) + L-serine(out). It catalyses the reaction L-phenylalanine(out) + glycine(in) = L-phenylalanine(in) + glycine(out). The enzyme catalyses L-phenylalanine(out) + L-alanine(in) = L-phenylalanine(in) + L-alanine(out). The catalysed reaction is L-tryptophan(in) = L-tryptophan(out). It carries out the reaction 3,3',5-triiodo-L-thyronine(out) = 3,3',5-triiodo-L-thyronine(in). It catalyses the reaction 3,3'-diiodo-L-thyronine(out) = 3,3'-diiodo-L-thyronine(in). The enzyme catalyses L-dopa(out) + L-phenylalanine(in) = L-dopa(in) + L-phenylalanine(out). Its function is as follows. Associates with SLC3A2 to form a functional heterodimeric complex that translocates small and large neutral amino acids with broad specificity and a stoichiometry of 1:1. Functions as amino acid antiporter mediating the influx of extracellular essential amino acids mainly in exchange with the efflux of highly concentrated intracellular amino acids. Has relatively symmetrical selectivities but strongly asymmetrical substrate affinities at both the intracellular and extracellular sides of the transporter. This asymmetry allows SLC7A8 to regulate intracellular amino acid pools (mM concentrations) by exchange with external amino acids (uM concentration range), equilibrating the relative concentrations of different amino acids across the plasma membrane instead of mediating their net uptake. May play an essential role in the reabsorption of neutral amino acids from the epithelial cells to the bloodstream in the kidney. Involved in the uptake of methylmercury (MeHg) when administered as the L-cysteine or D,L-homocysteine complexes, and hence plays a role in metal ion homeostasis and toxicity. Involved in the cellular activity of small molecular weight nitrosothiols, via the stereoselective transport of L-nitrosocysteine (L-CNSO) across the transmembrane. Imports the thyroid hormone diiodothyronine (T2) and to a smaller extent triiodothyronine (T3) but not rT 3 or thyroxine (T4). Mediates the uptake of L-DOPA. May participate in auditory function. This chain is Large neutral amino acids transporter small subunit 2 (Slc7a8), found in Mus musculus (Mouse).